The sequence spans 930 residues: Polypeptide N-acetylgalactosaminyltransferase 5 (930 aa).

Over 1-12 the chain is Cytoplasmic; it reads MNKIRKFFRGSG. A helical; Signal-anchor for type II membrane protein transmembrane segment spans residues 13-35; it reads RVLAFIFVASVIWLLFDMAALRL. At 36–930 the chain is on the lumenal side; sequence SFSEINTGIL…KWKFEKYYDV (895 aa). Residues 163–210 form a disordered region; the sequence is GSEKDSFTVSRGVPLNKTAEHTETLDKKQEAPENYNLSSDTSKQASQR. Asparagine 178 carries N-linked (GlcNAc...) asparagine glycosylation. The segment covering 180 to 193 has biased composition (basic and acidic residues); that stretch reads TAEHTETLDKKQEA. The span at 197 to 210 shows a compositional bias: polar residues; the sequence is YNLSSDTSKQASQR. Residues asparagine 198 and asparagine 213 are each glycosylated (N-linked (GlcNAc...) asparagine). Serine 285 bears the Phosphoserine mark. Asparagine 287 and asparagine 309 each carry an N-linked (GlcNAc...) asparagine glycan. Positions 344–377 are disordered; sequence LGESQGKHIPRSQSQTLSSPLAPKRAVSQSKPTL. Asparagine 387 and asparagine 403 each carry an N-linked (GlcNAc...) asparagine glycan. 3 disulfide bridges follow: cysteine 476/cysteine 708, cysteine 699/cysteine 779, and cysteine 812/cysteine 825. The interval 485 to 594 is catalytic subdomain A; that stretch reads LPTTSIIMCF…VGWLEPLLER (110 aa). Aspartate 526 and arginine 555 together coordinate substrate. Residue asparagine 568 is glycosylated (N-linked (GlcNAc...) asparagine). Residue aspartate 578 participates in Mn(2+) binding. Serine 579 provides a ligand contact to substrate. Histidine 580 contributes to the Mn(2+) binding site. The catalytic subdomain B stretch occupies residues 654–716; it reads IIRCPVMAGG…PCSRVGHIFR (63 aa). Residue tryptophan 685 coordinates substrate. Histidine 713 contributes to the Mn(2+) binding site. Substrate-binding residues include arginine 716 and tyrosine 721. Asparagine 766, asparagine 817, and asparagine 835 each carry an N-linked (GlcNAc...) asparagine glycan. Positions 794–925 constitute a Ricin B-type lectin domain; the sequence is KAPVVRASGV…TEPQQKWKFE (132 aa). Cystine bridges form between cysteine 848–cysteine 863 and cysteine 898–cysteine 913. Residue asparagine 902 is glycosylated (N-linked (GlcNAc...) asparagine).

The protein belongs to the glycosyltransferase 2 family. GalNAc-T subfamily. In terms of assembly, interacts with EXT2. Does not interact with EXT1, EXTL1 or EXTL3. It depends on Mn(2+) as a cofactor. In terms of tissue distribution, predominantly expressed in sublingual gland. Expressed at lower level in stomach and small intestine. Weakly or not expressed in submandibular gland, parotid gland, kidney, liver, heart, brain, spleen, lung, skeletal muscle, testis, ovary, cervix and uterus.

It is found in the golgi apparatus membrane. The catalysed reaction is L-seryl-[protein] + UDP-N-acetyl-alpha-D-galactosamine = a 3-O-[N-acetyl-alpha-D-galactosaminyl]-L-seryl-[protein] + UDP + H(+). It catalyses the reaction L-threonyl-[protein] + UDP-N-acetyl-alpha-D-galactosamine = a 3-O-[N-acetyl-alpha-D-galactosaminyl]-L-threonyl-[protein] + UDP + H(+). The protein operates within protein modification; protein glycosylation. In terms of biological role, catalyzes the initial reaction in O-linked oligosaccharide biosynthesis, the transfer of an N-acetyl-D-galactosamine residue to a serine or threonine residue on the protein receptor. Has activity toward EA2 peptide substrate, but has a weak activity toward Muc2, Muc1b, rMuc-2 or mG-Muc substrates. The polypeptide is Polypeptide N-acetylgalactosaminyltransferase 5 (Galnt5) (Rattus norvegicus (Rat)).